A 270-amino-acid chain; its full sequence is MFLVNSFLKGGGGGGGGGGLGGGLGNVLGGLISGAAGGGGGGGGGGGMGLGGGGGGGGTAMRILGGVISAISEAAAQYNPEPPPPRSHYSNIEANESEEERQFRKLFVQLAGDDMEVSATELMNILNKVVTRHPDLKTDGFGIDTCRSMVAVMDSDTTGKLGFEEFKYLWNNIKKWQGIYKRFDTDRSGTIGSNELPGAFEAAGFHLNQHIYSMIIRRYSDETGNMDFDNFISCLVRLDAMFRAFRSLDKNGTGQIQVNIQEWLQLTMYS.

M1 carries the N-acetylmethionine modification. The residue at position 6 (S6) is a Phosphoserine. Positions 98–132 (EEERQFRKLFVQLAGDDMEVSATELMNILNKVVTR) constitute an EF-hand 1; atypical domain. Ca(2+) is bound by residues A111, D114, E116, E121, D139, D154, D156, T158, K160, and E165. 4 consecutive EF-hand domains span residues 141–174 (FGIDTCRSMVAVMDSDTTGKLGFEEFKYLWNNIK), 171–206 (NNIKKWQGIYKRFDTDRSGTIGSNELPGAFEAAGFH), 207–235 (LNQHIYSMIIRRYSDETGNMDFDNFISCL), and 236–270 (VRLDAMFRAFRSLDKNGTGQIQVNIQEWLQLTMYS). The residue at position 181 (K181) is an N6-acetyllysine. Ca(2+)-binding residues include D184, D186, S188, T190, E195, and D227.

In terms of assembly, homodimer or heterodimer of a large (catalytic) and a small (regulatory) subunit. In presence of calcium, the heterodimer dissociates.

It localises to the cytoplasm. The protein resides in the cell membrane. Its function is as follows. Regulatory subunit of the calcium-regulated non-lysosomal thiol-protease which catalyzes limited proteolysis of substrates involved in cytoskeletal remodeling and signal transduction. Essential for embryonic development. The polypeptide is Calpain small subunit 1 (Capns1) (Rattus norvegicus (Rat)).